A 275-amino-acid polypeptide reads, in one-letter code: Phosphonoacetaldehyde hydrolase (275 aa).

Residue aspartate 15 is the Nucleophile of the active site. Mg(2+)-binding residues include aspartate 15 and alanine 17. Lysine 56 functions as the Schiff-base intermediate with substrate in the catalytic mechanism. Aspartate 189 provides a ligand contact to Mg(2+).

The protein belongs to the HAD-like hydrolase superfamily. PhnX family. Homodimer. The cofactor is Mg(2+).

The catalysed reaction is phosphonoacetaldehyde + H2O = acetaldehyde + phosphate + H(+). Its function is as follows. Involved in phosphonate degradation. The chain is Phosphonoacetaldehyde hydrolase from Pseudomonas aeruginosa (strain UCBPP-PA14).